We begin with the raw amino-acid sequence, 388 residues long: Succinate--CoA ligase [ADP-forming] subunit beta (388 aa).

The ATP-grasp domain occupies 9-244; sequence KQLFAEFGLP…PSQEDKREAH (236 aa). ATP is bound by residues K46, 53-55, E99, S102, and E107; that span reads GRG. Mg(2+) is bound by residues N199 and D213. Substrate is bound by residues N264 and 321–323; that span reads GIV.

The protein belongs to the succinate/malate CoA ligase beta subunit family. In terms of assembly, heterotetramer of two alpha and two beta subunits. The cofactor is Mg(2+).

The catalysed reaction is succinate + ATP + CoA = succinyl-CoA + ADP + phosphate. It catalyses the reaction GTP + succinate + CoA = succinyl-CoA + GDP + phosphate. It participates in carbohydrate metabolism; tricarboxylic acid cycle; succinate from succinyl-CoA (ligase route): step 1/1. Functionally, succinyl-CoA synthetase functions in the citric acid cycle (TCA), coupling the hydrolysis of succinyl-CoA to the synthesis of either ATP or GTP and thus represents the only step of substrate-level phosphorylation in the TCA. The beta subunit provides nucleotide specificity of the enzyme and binds the substrate succinate, while the binding sites for coenzyme A and phosphate are found in the alpha subunit. This Vibrio vulnificus (strain YJ016) protein is Succinate--CoA ligase [ADP-forming] subunit beta.